Consider the following 236-residue polypeptide: Class B acid phosphatase (236 aa).

The first 22 residues, 1-22 (MKNVMKLSVIALLTAAAVPAMA), serve as a signal peptide directing secretion. Aspartate 67 serves as the catalytic Nucleophile. Mg(2+) is bound by residues aspartate 67 and aspartate 69. Aspartate 69 functions as the Proton donor in the catalytic mechanism. Substrate contacts are provided by residues 136–137 (TG) and lysine 176. Position 191 (aspartate 191) interacts with Mg(2+).

It belongs to the class B bacterial acid phosphatase family. Homotetramer. Mg(2+) is required as a cofactor.

Its subcellular location is the periplasm. It catalyses the reaction a phosphate monoester + H2O = an alcohol + phosphate. Its function is as follows. Dephosphorylates several organic phosphate monoesters. Also has a phosphotransferase activity catalyzing the transfer of low-energy phosphate groups from organic phosphate monoesters to free hydroxyl groups of various organic compounds. This chain is Class B acid phosphatase (aphA), found in Haemophilus influenzae (strain ATCC 51907 / DSM 11121 / KW20 / Rd).